We begin with the raw amino-acid sequence, 440 residues long: Serine hydroxymethyltransferase (440 aa).

(6S)-5,6,7,8-tetrahydrofolate contacts are provided by residues Leu-119 and 123–125 (GHL). Position 228 is an N6-(pyridoxal phosphate)lysine (Lys-228). 370–372 (SPF) contributes to the (6S)-5,6,7,8-tetrahydrofolate binding site.

The protein belongs to the SHMT family. As to quaternary structure, homodimer. It depends on pyridoxal 5'-phosphate as a cofactor.

The protein resides in the cytoplasm. The catalysed reaction is (6R)-5,10-methylene-5,6,7,8-tetrahydrofolate + glycine + H2O = (6S)-5,6,7,8-tetrahydrofolate + L-serine. The protein operates within one-carbon metabolism; tetrahydrofolate interconversion. It participates in amino-acid biosynthesis; glycine biosynthesis; glycine from L-serine: step 1/1. Catalyzes the reversible interconversion of serine and glycine with tetrahydrofolate (THF) serving as the one-carbon carrier. This reaction serves as the major source of one-carbon groups required for the biosynthesis of purines, thymidylate, methionine, and other important biomolecules. Also exhibits THF-independent aldolase activity toward beta-hydroxyamino acids, producing glycine and aldehydes, via a retro-aldol mechanism. The protein is Serine hydroxymethyltransferase of Chlorobaculum tepidum (strain ATCC 49652 / DSM 12025 / NBRC 103806 / TLS) (Chlorobium tepidum).